A 69-amino-acid chain; its full sequence is Alpha-conotoxin SrIA/SrIB (69 aa).

The first 21 residues, 1–21, serve as a signal peptide directing secretion; it reads MGMRMMFTVFLLVVLATTVVS. Positions 22–48 are excised as a propeptide; sequence FTSDSAFDSRNVAANDKVSDMIALTAR. 2 disulfides stabilise this stretch: cysteine 51–cysteine 57 and cysteine 52–cysteine 65. The segment at 53 to 55 is ser-Xaa-Pro motif, crucial for potent interaction with nAChR; sequence SRP. Proline 55 bears the 4-hydroxyproline; in form Sr1A and Sr1B mark. Glutamate 60 is subject to 4-carboxyglutamate; in form Sr1A. Residue glutamate 63 is modified to 4-carboxyglutamate; in form Sr1A and Sr1B. Position 66 is a glycine amide; in form Sr1A and Sr1B (glycine 66).

The protein belongs to the conotoxin A superfamily. Post-translationally, occurs in 2 forms which differ in the post-translational modification of Glu-60. In form SrA1 Glu-60 is 4-carboxyglutamate while in form SrA2 Glu-60 is unmodified. Expressed by the venom duct.

It is found in the secreted. In terms of biological role, alpha-conotoxins act on postsynaptic membranes, they bind to the nicotinic acetylcholine receptors (nAChR) and thus inhibit them. Has weak blocking effects on muscle nAChR composed of alpha-1/beta-1/gamma/delta subunits and the central nervous system nAChR composed of alpha-4/beta-2 subunits. Does not detectably affect the peripheral nervous system nAChR composed of alpha-3/beta-4 subunits. Low toxin concentrations potentiate currents in muscle nAChR composed of alpha-1/beta-1/gamma/delta subunits and central nervous system nAChR composed of alpha-4/beta-2 subunits, but not the peripheral nervous system nAChR composed of alpha-3/beta-4 subunits. This is Alpha-conotoxin SrIA/SrIB from Conus spurius (Alphabet cone).